The sequence spans 345 residues: Splicing factor YJU2 (345 aa).

Zn(2+) is bound by residues Cys43, Cys46, Cys80, and Cys83. A disordered region spans residues 205–345 (KRLRDSDSEE…YSDSDDSSSD (141 aa)). The span at 217 to 232 (ENAKERSKKHIADKPT) shows a compositional bias: basic and acidic residues. Composition is skewed to low complexity over residues 308–317 (SSITSSSASS) and 327–337 (GSSLGLLGAYS).

The protein belongs to the CWC16 family. YJU2 subfamily. Component of the spliceosome. Present in the activated B complex, the catalytically activated B* complex which catalyzes the branching, the catalytic step 1 C complex catalyzing the exon ligation, and the postcatalytic P complex containing the ligated exons (mRNA) and the excised lariat intron.

It localises to the nucleus. In terms of biological role, part of the spliceosome which catalyzes two sequential transesterification reactions, first the excision of the non-coding intron from pre-mRNA and then the ligation of the coding exons to form the mature mRNA. Plays a role in stabilizing the structure of the spliceosome catalytic core and docking of the branch helix into the active site, producing 5'-exon and lariat intron-3'-intermediates. May protect cells from TP53-dependent apoptosis upon dsDNA break damage through association with PRP19-CD5L complex. This is Splicing factor YJU2 from Danio rerio (Zebrafish).